The chain runs to 496 residues: T-cell activation inhibitor, mitochondrial (496 aa).

Positions 404 to 437 (KAQQARENMKRKEELKVIENELIQASTKKFSLEK) form a coiled coil.

The protein resides in the mitochondrion. Functionally, may regulate T-cell apoptosis. The sequence is that of T-cell activation inhibitor, mitochondrial (TCAIM) from Homo sapiens (Human).